A 379-amino-acid polypeptide reads, in one-letter code: Protein psi1 (379 aa).

Positions 1–70 (MVADTKLYDC…RKLYDQYGIT (70 aa)) constitute a J domain. 2 disordered regions span residues 69-95 (ITEG…FPGA) and 176-205 (FGGG…AQNE). Residues 81–95 (AEGGPGAGFGGFPGA) show a composition bias toward gly residues.

In terms of biological role, required for nuclear migration during mitosis. It is required for the normal initiation of translation. This Schizosaccharomyces pombe (strain 972 / ATCC 24843) (Fission yeast) protein is Protein psi1 (psi1).